Here is a 230-residue protein sequence, read N- to C-terminus: Gilatoxin (230 aa).

In terms of domain architecture, Peptidase S1 spans 1 to 230; that stretch reads IIGGQECDET…ISFLFWIQSI (230 aa). 5 disulfides stabilise this stretch: cysteine 7/cysteine 146, cysteine 26/cysteine 42, cysteine 125/cysteine 193, cysteine 157/cysteine 172, and cysteine 183/cysteine 208. Residue histidine 41 is the Charge relay system of the active site. An N-linked (GlcNAc...) asparagine glycan is attached at asparagine 84. Catalysis depends on aspartate 93, which acts as the Charge relay system. Serine 187 serves as the catalytic Charge relay system.

This sequence belongs to the peptidase S1 family. Extensively glycosylated, contains approximately 8 mol of monosaccharide per mol of toxin. In terms of tissue distribution, expressed by the mandibular venom gland.

The protein resides in the secreted. In terms of biological role, has kallikrein-like activity, releases bradykinin from kininogen. Catalyzes the hydrolysis of various arginine ester substrates for trypsin and thrombin and degrades both angiotensin I and II by cleavage of the dipeptide Asp-Arg from the NH2-terminal end. Fibrinogen is also degraded but a fibrin clot is not produced. May have a potentiating effect on potent hemorrhagic toxins present in the venom. This chain is Gilatoxin, found in Heloderma horridum horridum (Mexican beaded lizard).